The chain runs to 101 residues: Small ribosomal subunit protein uS14 (101 aa).

Belongs to the universal ribosomal protein uS14 family. As to quaternary structure, part of the 30S ribosomal subunit. Contacts proteins S3 and S10.

Functionally, binds 16S rRNA, required for the assembly of 30S particles and may also be responsible for determining the conformation of the 16S rRNA at the A site. The sequence is that of Small ribosomal subunit protein uS14 from Roseobacter denitrificans (strain ATCC 33942 / OCh 114) (Erythrobacter sp. (strain OCh 114)).